Here is a 272-residue protein sequence, read N- to C-terminus: Indole-3-glycerol phosphate synthase (272 aa).

This sequence belongs to the TrpC family.

It carries out the reaction 1-(2-carboxyphenylamino)-1-deoxy-D-ribulose 5-phosphate + H(+) = (1S,2R)-1-C-(indol-3-yl)glycerol 3-phosphate + CO2 + H2O. The protein operates within amino-acid biosynthesis; L-tryptophan biosynthesis; L-tryptophan from chorismate: step 4/5. This is Indole-3-glycerol phosphate synthase from Mycolicibacterium paratuberculosis (strain ATCC BAA-968 / K-10) (Mycobacterium paratuberculosis).